Consider the following 275-residue polypeptide: NAC domain-containing protein 2 (275 aa).

Residues 10–162 (LPPGFRFHPT…DWVLCRIYKK (153 aa)) enclose the NAC domain. Residues 107–168 (VGIKKALVFY…IYKKKNLERA (62 aa)) mediate DNA binding.

As to expression, expressed in roots, stem, flowers, and leaves.

The protein resides in the nucleus. Functionally, transcription factor that binds DNA motifs 5'-CGT[AG](5N)NACG[ACT][AC][AT][ACG][ACT]-3' and 5'-CACG[ACT][AC][AT][AGT][CT]-3' in target genes promoters. Promotes leaf senescence (developmental, light-induced and ABA-induced senescence) and regulates fruit yield and sugar content, probably by establishing abscisic acid (ABA) homeostasis. Activates the expression of senescence and ABA associated genes including NCED1, ABCG40, CYP707A2, SAG113, SGR1 and PAO, by directly binding to their promoters. The chain is NAC domain-containing protein 2 from Solanum lycopersicum (Tomato).